Reading from the N-terminus, the 223-residue chain is GTP cyclohydrolase 1 (223 aa).

Zn(2+)-binding residues include cysteine 114, histidine 117, and cysteine 185.

This sequence belongs to the GTP cyclohydrolase I family. In terms of assembly, homomer.

The enzyme catalyses GTP + H2O = 7,8-dihydroneopterin 3'-triphosphate + formate + H(+). It participates in cofactor biosynthesis; 7,8-dihydroneopterin triphosphate biosynthesis; 7,8-dihydroneopterin triphosphate from GTP: step 1/1. The protein is GTP cyclohydrolase 1 of Chlorobium phaeovibrioides (strain DSM 265 / 1930) (Prosthecochloris vibrioformis (strain DSM 265)).